We begin with the raw amino-acid sequence, 328 residues long: V-type sodium ATPase subunit C (328 aa).

Belongs to the V-ATPase V0D/AC39 subunit family.

Its function is as follows. Involved in ATP-driven sodium extrusion. The sequence is that of V-type sodium ATPase subunit C (ntpC) from Enterococcus hirae (strain ATCC 9790 / DSM 20160 / JCM 8729 / LMG 6399 / NBRC 3181 / NCIMB 6459 / NCDO 1258 / NCTC 12367 / WDCM 00089 / R).